We begin with the raw amino-acid sequence, 89 residues long: Small ribosomal subunit protein uS15 (89 aa).

Belongs to the universal ribosomal protein uS15 family. Part of the 30S ribosomal subunit. Forms a bridge to the 50S subunit in the 70S ribosome, contacting the 23S rRNA.

Functionally, one of the primary rRNA binding proteins, it binds directly to 16S rRNA where it helps nucleate assembly of the platform of the 30S subunit by binding and bridging several RNA helices of the 16S rRNA. In terms of biological role, forms an intersubunit bridge (bridge B4) with the 23S rRNA of the 50S subunit in the ribosome. The sequence is that of Small ribosomal subunit protein uS15 from Caulobacter vibrioides (strain NA1000 / CB15N) (Caulobacter crescentus).